A 347-amino-acid polypeptide reads, in one-letter code: UPF0284 protein LS215_0030 (347 aa).

It belongs to the UPF0284 family.

The protein is UPF0284 protein LS215_0030 of Saccharolobus islandicus (strain L.S.2.15 / Lassen #1) (Sulfolobus islandicus).